A 221-amino-acid chain; its full sequence is Urease accessory protein UreF (221 aa).

The protein belongs to the UreF family. UreD, UreF and UreG form a complex that acts as a GTP-hydrolysis-dependent molecular chaperone, activating the urease apoprotein by helping to assemble the nickel containing metallocenter of UreC. The UreE protein probably delivers the nickel.

The protein resides in the cytoplasm. Functionally, required for maturation of urease via the functional incorporation of the urease nickel metallocenter. The polypeptide is Urease accessory protein UreF (Teredinibacter turnerae (strain ATCC 39867 / T7901)).